A 136-amino-acid polypeptide reads, in one-letter code: Probable S-adenosyl-L-methionine-binding protein PH1056 (136 aa).

Residues 8 to 126 (IVPVGYIRKE…FPERYDCPKE (119 aa)) form the TsaA-like domain. Residues 48-49 (HK), arginine 78, and 106-109 (EDGT) each bind S-adenosyl-L-methionine.

The protein belongs to the tRNA methyltransferase O family.

The chain is Probable S-adenosyl-L-methionine-binding protein PH1056 from Pyrococcus horikoshii (strain ATCC 700860 / DSM 12428 / JCM 9974 / NBRC 100139 / OT-3).